Consider the following 181-residue polypeptide: Inner membrane-spanning protein YciB (181 aa).

5 consecutive transmembrane segments (helical) span residues 10-30, 50-70, 80-100, 120-140, and 148-168; these read LIIFFALYKFYDIYVATGALI, MQLITFVMVALFGGMTLALHD, IVYVVFALGLTISQIMGKPAI, WAWVMFFSGCAALNLYVAYHL, and FKVFGLLAATFVFTLLTGGYI.

The protein belongs to the YciB family.

It localises to the cell inner membrane. Functionally, plays a role in cell envelope biogenesis, maintenance of cell envelope integrity and membrane homeostasis. The sequence is that of Inner membrane-spanning protein YciB from Vibrio cholerae serotype O1 (strain ATCC 39541 / Classical Ogawa 395 / O395).